An 879-amino-acid polypeptide reads, in one-letter code: Leucine--tRNA ligase (879 aa).

The short motif at 45–55 (PYPSGALHMGH) is the 'HIGH' region element. Positions 637–641 (KMSKS) match the 'KMSKS' region motif. K640 lines the ATP pocket.

This sequence belongs to the class-I aminoacyl-tRNA synthetase family.

Its subcellular location is the cytoplasm. The catalysed reaction is tRNA(Leu) + L-leucine + ATP = L-leucyl-tRNA(Leu) + AMP + diphosphate. In Xylella fastidiosa (strain 9a5c), this protein is Leucine--tRNA ligase.